A 541-amino-acid polypeptide reads, in one-letter code: Acyl-CoA ligase M9 (541 aa).

186–197 lines the AMP pocket; the sequence is AMSTSGTTGLPK. The interval 445–519 is AMP-binding; it reads ELEAVLHQMP…DSLPRNSSGK (75 aa).

This sequence belongs to the ATP-dependent AMP-binding enzyme family.

It functions in the pathway secondary metabolite biosynthesis. Functionally, acyl-CoA ligase; part of the gene cluster that mediates the biosynthesis of squalestatin S1 (SQS1, also known as zaragozic acid A), a heavily oxidized fungal polyketide that offers potent cholesterol lowering activity by targeting squalene synthase (SS). SQS1 is composed of a 2,8-dioxobicyclic[3.2.1]octane-3,4,5-tricarboxyclic acid core that is connected to two lipophilic polyketide arms. These initial steps feature the priming of an unusual benzoic acid starter unit onto the highly reducing polyketide synthase pks2, followed by oxaloacetate extension and product release to generate a tricarboxylic acid containing product. The phenylalanine ammonia lyase (PAL) M7 and the acyl-CoA ligase M9 are involved in transforming phenylalanine into benzoyl-CoA. The citrate synthase-like protein R3 is involved in connecting the C-alpha-carbons of the hexaketide chain and oxaloacetate to afford the tricarboxylic acid unit. The potential hydrolytic enzymes, M8 and M10, are in close proximity to pks2 and may participate in product release. On the other side, the tetraketide arm is synthesized by a the squalestatin tetraketide synthase pks1 and enzymatically esterified to the core in the last biosynthetic step, by the acetyltransferase M4. The biosynthesis of the tetraketide must involve 3 rounds of chain extension. After the first and second rounds methyl-transfer occurs, and in all rounds of extension the ketoreductase and dehydratase are active. The enoyl reductase and C-MeT of pks1 are not active in the final round of extension. The acetyltransferase M4 appears to have a broad substrate selectivity for its acyl CoA substrate, allowing the in vitro synthesis of novel squalestatins. The biosynthesis of SQS1 requires several oxidative steps likely performed by oxidoreductases M1, R1 and R2. Finally, in support of the identification of the cluster as being responsible for SQS1 production, the cluster contains a gene encoding a putative squalene synthase (SS) R6, suggesting a likely mechanism for self-resistance. In Phoma sp. (strain ATCC 20986 / MF5453), this protein is Acyl-CoA ligase M9.